The chain runs to 161 residues: Transcription elongation factor GreA (161 aa).

Positions 8 to 28 (LTQEGFKQLEKELENLIQVKR) form a coiled coil.

The protein belongs to the GreA/GreB family.

Functionally, necessary for efficient RNA polymerase transcription elongation past template-encoded arresting sites. The arresting sites in DNA have the property of trapping a certain fraction of elongating RNA polymerases that pass through, resulting in locked ternary complexes. Cleavage of the nascent transcript by cleavage factors such as GreA or GreB allows the resumption of elongation from the new 3'terminus. GreA releases sequences of 2 to 3 nucleotides. This chain is Transcription elongation factor GreA, found in Mycoplasma genitalium (strain ATCC 33530 / DSM 19775 / NCTC 10195 / G37) (Mycoplasmoides genitalium).